The chain runs to 126 residues: Holo-[acyl-carrier-protein] synthase (126 aa).

Residues D8 and E57 each contribute to the Mg(2+) site.

The protein belongs to the P-Pant transferase superfamily. AcpS family. Mg(2+) is required as a cofactor.

Its subcellular location is the cytoplasm. It carries out the reaction apo-[ACP] + CoA = holo-[ACP] + adenosine 3',5'-bisphosphate + H(+). Transfers the 4'-phosphopantetheine moiety from coenzyme A to a Ser of acyl-carrier-protein. The chain is Holo-[acyl-carrier-protein] synthase from Trichlorobacter lovleyi (strain ATCC BAA-1151 / DSM 17278 / SZ) (Geobacter lovleyi).